Reading from the N-terminus, the 285-residue chain is Chitinase 4 (285 aa).

The first 27 residues, 1-27 (MAAKMATMVALVFGLALLLSAAAPAAA), serve as a signal peptide directing secretion. The region spanning 28-62 (QNCGCQDGYCCSQWGYCGTTEAYCGQGCQSGPCWG) is the Chitin-binding type-1 domain. 7 disulfide bridges follow: cysteine 30–cysteine 38, cysteine 32–cysteine 44, cysteine 37–cysteine 51, cysteine 55–cysteine 60, cysteine 104–cysteine 153, cysteine 166–cysteine 175, and cysteine 253–cysteine 285. Catalysis depends on glutamate 148, which acts as the Proton donor.

It belongs to the glycosyl hydrolase 19 family. Chitinase class IV subfamily. As to expression, expressed at low levels in leaves, sheaths and meristems.

It catalyses the reaction Random endo-hydrolysis of N-acetyl-beta-D-glucosaminide (1-&gt;4)-beta-linkages in chitin and chitodextrins.. Its function is as follows. Hydrolyzes chitin and may function in reproductive organs during embryogenesis and seed maturation. The chain is Chitinase 4 (Cht4) from Oryza sativa subsp. japonica (Rice).